A 686-amino-acid chain; its full sequence is MILIIAEKPNVARKIAGALSERRPIKKSLFGVPYYEIFREGKKLIVASAVGHLYGLAPKRDVFGYPIFDIEWVPVYIAEKGKEYAREYIKALSVLAKRVREFIVACDYDTEGEVIGYTALKYACGVDPRVAKRMKFSALTKRDLLNAWRNLEPTINFGMANAGIARHILDWYWGVNLSRALTHAIKKASGKWVVLSTGRVQGPTLKFLVEREREIQSFVPRPYWVIKLIFEKNGQKFTANYEKDKIWEEEEGKRIVLEVKKSIPRVSNVEIKRQKRTPPHPFDLGTLQREAYSAFGFSPKKTLDIAQSLYEKGFSSYPRTESQKLPRNINFRMIIQNLAKMPQYRPYAHILLGLPELKPVEGKKEDPAHPAIYPTGEIPRPGDLTKDEEKLYDMIVRRFLAVFMEPAIRESVKVTIRAGPHKFFLSGGRTVKKGWLSVYGKYVKFEEVTLPEFFIGERIKVIQVKREKKKTKPPARYSPAAVIKKMEDLGLGTKATRAQILETLYQRGYIEGKKSIKVTPLGMKVIETLEKYVPEIISVELTREFEKKMELIMEGRLTKEEVIEEAKERLTKILEEFKKRELEIGIELAKIVVGEDEVKPLVVGKCPKCGGDLIVKYNKKTGKRFVGCSNWPKCDVTYPILQRGEIIPTNKTCCNGAPVVIIREEDGREFEICLDINCKDWKAKSH.

A Toprim domain is found at 1–141 (MILIIAEKPN…KRMKFSALTK (141 aa)). Residues Glu7 and Asp107 each contribute to the Mg(2+) site. Residues 156–574 (NFGMANAGIA…EAKERLTKIL (419 aa)) enclose the Topo IA-type catalytic domain. Residues 196-201 (STGRVQ) are interaction with DNA. The active-site O-(5'-phospho-DNA)-tyrosine intermediate is Tyr317. Residues 606-634 (CPKCGGDLIVKYNKKTGKRFVGCSNWPKC) form a C4-type 1 zinc finger. A C4-type 2; atypical zinc finger spans residues 653–678 (CCNGAPVVIIREEDGREFEICLDINC).

It belongs to the type IA topoisomerase family. Monomer. Mg(2+) is required as a cofactor.

The enzyme catalyses ATP-independent breakage of single-stranded DNA, followed by passage and rejoining.. Functionally, releases the supercoiling and torsional tension of DNA, which is introduced during the DNA replication and transcription, by transiently cleaving and rejoining one strand of the DNA duplex. Introduces a single-strand break via transesterification at a target site in duplex DNA. The scissile phosphodiester is attacked by the catalytic tyrosine of the enzyme, resulting in the formation of a DNA-(5'-phosphotyrosyl)-enzyme intermediate and the expulsion of a 3'-OH DNA strand. The free DNA strand then undergoes passage around the unbroken strand, thus removing DNA supercoils. Finally, in the religation step, the DNA 3'-OH attacks the covalent intermediate to expel the active-site tyrosine and restore the DNA phosphodiester backbone. This chain is DNA topoisomerase 1, found in Pyrococcus horikoshii (strain ATCC 700860 / DSM 12428 / JCM 9974 / NBRC 100139 / OT-3).